The following is a 543-amino-acid chain: Aluminum-activated malate transporter 14 (543 aa).

6 helical membrane passes run Val56–Ile76, Ala80–Cys100, Gly106–Ser126, Ile129–Leu149, Leu164–Ile184, and Phe191–Ile211. The segment at Asp416 to Gly438 is disordered. Positions Glu419–Thr428 are enriched in polar residues. Positions Arg445–Ile472 form a coiled coil.

Belongs to the aromatic acid exporter (TC 2.A.85) family.

It localises to the membrane. Its function is as follows. Malate transporter. This is Aluminum-activated malate transporter 14 (ALMT14) from Arabidopsis thaliana (Mouse-ear cress).